Consider the following 279-residue polypeptide: Putative pyruvate, phosphate dikinase regulatory protein (279 aa).

An ADP-binding site is contributed by 153–160 (GVSRTSKT).

The protein belongs to the pyruvate, phosphate/water dikinase regulatory protein family. PDRP subfamily.

The enzyme catalyses N(tele)-phospho-L-histidyl/L-threonyl-[pyruvate, phosphate dikinase] + ADP = N(tele)-phospho-L-histidyl/O-phospho-L-threonyl-[pyruvate, phosphate dikinase] + AMP + H(+). The catalysed reaction is N(tele)-phospho-L-histidyl/O-phospho-L-threonyl-[pyruvate, phosphate dikinase] + phosphate + H(+) = N(tele)-phospho-L-histidyl/L-threonyl-[pyruvate, phosphate dikinase] + diphosphate. Functionally, bifunctional serine/threonine kinase and phosphorylase involved in the regulation of the pyruvate, phosphate dikinase (PPDK) by catalyzing its phosphorylation/dephosphorylation. The sequence is that of Putative pyruvate, phosphate dikinase regulatory protein from Bradyrhizobium sp. (strain ORS 278).